Here is a 281-residue protein sequence, read N- to C-terminus: MEMO1 family protein APE_1771 (281 aa).

It belongs to the MEMO1 family.

This is MEMO1 family protein APE_1771 from Aeropyrum pernix (strain ATCC 700893 / DSM 11879 / JCM 9820 / NBRC 100138 / K1).